A 195-amino-acid polypeptide reads, in one-letter code: Pyridoxal 5'-phosphate synthase subunit PdxT (195 aa).

46 to 48 contributes to the L-glutamine binding site; that stretch reads GES. Cys78 serves as the catalytic Nucleophile. Residues Arg107 and 136–137 each bind L-glutamine; that span reads IR. Residues His173 and Glu175 each act as charge relay system in the active site.

This sequence belongs to the glutaminase PdxT/SNO family. As to quaternary structure, in the presence of PdxS, forms a dodecamer of heterodimers. Only shows activity in the heterodimer.

The enzyme catalyses aldehydo-D-ribose 5-phosphate + D-glyceraldehyde 3-phosphate + L-glutamine = pyridoxal 5'-phosphate + L-glutamate + phosphate + 3 H2O + H(+). The catalysed reaction is L-glutamine + H2O = L-glutamate + NH4(+). The protein operates within cofactor biosynthesis; pyridoxal 5'-phosphate biosynthesis. Catalyzes the hydrolysis of glutamine to glutamate and ammonia as part of the biosynthesis of pyridoxal 5'-phosphate. The resulting ammonia molecule is channeled to the active site of PdxS. The sequence is that of Pyridoxal 5'-phosphate synthase subunit PdxT from Dehalococcoides mccartyi (strain ATCC BAA-2266 / KCTC 15142 / 195) (Dehalococcoides ethenogenes (strain 195)).